The sequence spans 311 residues: MVSTKTQIAGFEFDNCLMNAAGVACMTIEELEEVKNSAAGTFVTKTATLDFRQGNPEPRYQDVPLGSINSMGLPNNGLDYYLDYLLDLQEKESNRTFFLSLVGMSPEETHTILKKVQESDFRGLTELNLSCPNVPGKPQIAYDFETTDRILAEVFAYFTKPLGIKLPPYFDIVHFDQAAAIFNKYPLKFVNCVNSIGNGLYIEDESVVIRPKNGFGGIGGEYIKPTALANVHAFYQRLNPQIQIIGTGGVLTGRDAFEHILCGASMVQVGTTLHKEGVSAFDRITNELKAIMVEKGYESLEDFRGKLRYID.

Substrate-binding positions include K45, 69-73, and N128; that span reads NSMGL. Residue 45-46 participates in FMN binding; it reads KT. N128 contacts FMN. Catalysis depends on C131, which acts as the Nucleophile. FMN is bound by residues K165 and V193. 194–195 is a binding site for substrate; that stretch reads NS. FMN is bound by residues G220, 248 to 249, and 270 to 271; these read GG and GT.

It belongs to the dihydroorotate dehydrogenase family. Type 1 subfamily. As to quaternary structure, homodimer. FMN serves as cofactor.

Its subcellular location is the cytoplasm. It catalyses the reaction (S)-dihydroorotate + fumarate = orotate + succinate. It functions in the pathway pyrimidine metabolism; UMP biosynthesis via de novo pathway. Catalyzes the conversion of dihydroorotate to orotate with fumarate as the electron acceptor. The chain is Probable dihydroorotate dehydrogenase A (fumarate) (pyrDA) from Streptococcus pneumoniae serotype 4 (strain ATCC BAA-334 / TIGR4).